We begin with the raw amino-acid sequence, 753 residues long: Inactive protein-tyrosine phosphatase egg-4 (753 aa).

Disordered regions lie at residues 26–46 and 75–145; these read TSLQSFCSGNTDDSSADSTDN and SFRK…SGHG. Positions 35-46 are enriched in low complexity; it reads NTDDSSADSTDN. Basic and acidic residues-rich tracts occupy residues 84-94 and 129-145; these read AQKDRRSKERL and VSEKPKDEGRREDSGHG. The Tyrosine-protein phosphatase domain occupies 408–661; the sequence is MERRFEILEN…IFVHRLVAFF (254 aa).

Belongs to the protein-tyrosine phosphatase family. As to quaternary structure, part of a complex, consisting of pseudophosphatases egg-3, egg-4, egg-5 and kinase mbk-2; this complex is required for the oocyte-to-zygote transition. Interacts (via tyrosine-protein phosphatase domain) with kinase mbk-2 (via 'Tyr-619' and 'Tyr-621'); mbk-2 tyrosine phosphorylation enhances the interaction. The interaction inhibits mbk-2 kinase activity and is required for mbk-2 oocyte cortex localization. Interacts with egg-3.

The protein resides in the cytoplasm. The protein localises to the cell cortex. Functionally, inactive phosphatase which acts redundantly with egg-5 in the oocyte-to-zygote transition. Required for the polarization of cortical actin cytoskeleton rearrangement in the oocyte before and after fertilization. Together with egg-5, required for the cortical localization of kinase mbk-2 and for the inhibition of mbk-2 kinase activity in maturing oocyte until the end of meiosis I. Also required for kinase mbk-2, pseudophosphatase egg-3 and chitin synthase chs-1 localization to cytoplasmic foci after fertilization. This Caenorhabditis elegans protein is Inactive protein-tyrosine phosphatase egg-4.